The chain runs to 119 residues: Large ribosomal subunit protein bL20 (119 aa).

It belongs to the bacterial ribosomal protein bL20 family.

In terms of biological role, binds directly to 23S ribosomal RNA and is necessary for the in vitro assembly process of the 50S ribosomal subunit. It is not involved in the protein synthesizing functions of that subunit. This is Large ribosomal subunit protein bL20 from Chloroflexus aurantiacus (strain ATCC 29366 / DSM 635 / J-10-fl).